A 295-amino-acid chain; its full sequence is Putative fused nickel transport protein NikMN (295 aa).

8 helical membrane passes run 8–28 (LDLS…GYSI), 39–59 (LFGI…PIPG), 70–90 (LAGI…VLTI), 98–118 (GGIT…VFVG), 135–155 (FIAG…EIGI), 175–195 (ALLG…IAAA), 211–231 (LAVI…AELV), and 268–288 (AGTL…GFAL).

It belongs to the CbiM family. NikM subfamily.

The protein resides in the cell membrane. In terms of biological role, may be involved in nickel transport. The polypeptide is Putative fused nickel transport protein NikMN (Archaeoglobus fulgidus (strain ATCC 49558 / DSM 4304 / JCM 9628 / NBRC 100126 / VC-16)).